The primary structure comprises 183 residues: Macro domain-containing protein (183 aa).

One can recognise a Macro domain in the interval 1-174; the sequence is MKKVHLIQAD…IYKNILSNID (174 aa).

This sequence belongs to the MacroD-type family.

The polypeptide is Macro domain-containing protein (Acinetobacter sp. (strain ED45-25)).